We begin with the raw amino-acid sequence, 456 residues long: UDP-N-acetylmuramate--L-alanine ligase (456 aa).

112–118 lines the ATP pocket; sequence GAHGKTS.

It belongs to the MurCDEF family.

It localises to the cytoplasm. It catalyses the reaction UDP-N-acetyl-alpha-D-muramate + L-alanine + ATP = UDP-N-acetyl-alpha-D-muramoyl-L-alanine + ADP + phosphate + H(+). The protein operates within cell wall biogenesis; peptidoglycan biosynthesis. Cell wall formation. This Desulforapulum autotrophicum (strain ATCC 43914 / DSM 3382 / VKM B-1955 / HRM2) (Desulfobacterium autotrophicum) protein is UDP-N-acetylmuramate--L-alanine ligase.